The sequence spans 103 residues: MSIQAIESVLQLMQAQALQAASIAKPLPLQSGFASQLMAAVGKINQTRLNATKRAQDFTLGVPGVELNDVMVEMQKSSIALQIGVQAKNKLTASYQEIMNMQV.

It belongs to the FliE family.

It localises to the bacterial flagellum basal body. This is Flagellar hook-basal body complex protein FliE from Photorhabdus laumondii subsp. laumondii (strain DSM 15139 / CIP 105565 / TT01) (Photorhabdus luminescens subsp. laumondii).